We begin with the raw amino-acid sequence, 927 residues long: Calmodulin-binding transcription activator CBT (927 aa).

Positions 26 to 152 form a DNA-binding region, CG-1; sequence YEKLVAEAAA…YRQTAEENAM (127 aa). Residues 70-96 are necessary and sufficient for nuclear localization; that stretch reads LYDRKVVRNFRKDGHNWKKKKDGRTVQ. Residues 72 to 79 carry the Nuclear localization signal motif; the sequence is DRKVVRNF. The ANK repeat unit spans residues 609–638; sequence SGWTALHWAAYHGRERMVATLLSAGANPSL. IQ domains are found at residues 757 to 786 and 799 to 828; these read EIVA…IQSH and MRRQ…SVGI. The segment at 826 to 845 is calmodulin-binding; the sequence is VGIVEKAILRWRKKRKGLRG. The tract at residues 830-851 is necessary and sufficient for nuclear localization; the sequence is EKAILRWRKKRKGLRGIASGMP. Residues 882-911 form the IQ 3 domain; sequence FNRSVVRVQALFRSYKAQQEYRRMKIAHEE.

It belongs to the CAMTA family.

Its subcellular location is the nucleus. Its activity is regulated as follows. Transcriptional activation activity is strongly reduced by calmodulin. In terms of biological role, transcription activator that binds calmodulin in a calcium-dependent manner in vitro. Binds to the DNA consensus sequence 5'-T[AC]CG[CT]GT[GT][GT][GT][GT]T[GT]CG-3'. The chain is Calmodulin-binding transcription activator CBT from Oryza sativa subsp. japonica (Rice).